Consider the following 348-residue polypeptide: Centromere protein N-B (348 aa).

The protein belongs to the CENP-N/CHL4 family.

Its subcellular location is the nucleus. The protein localises to the chromosome. It is found in the centromere. Its function is as follows. Probable component of a centromeric complex involved in assembly of kinetochore proteins, mitotic progression and chromosome segregation. This is Centromere protein N-B (cenpn-b) from Xenopus laevis (African clawed frog).